A 131-amino-acid chain; its full sequence is Small ribosomal subunit protein uS8 (131 aa).

This sequence belongs to the universal ribosomal protein uS8 family. Part of the 30S ribosomal subunit. Contacts proteins S5 and S12.

Its function is as follows. One of the primary rRNA binding proteins, it binds directly to 16S rRNA central domain where it helps coordinate assembly of the platform of the 30S subunit. The protein is Small ribosomal subunit protein uS8 of Cupriavidus metallidurans (strain ATCC 43123 / DSM 2839 / NBRC 102507 / CH34) (Ralstonia metallidurans).